Here is a 361-residue protein sequence, read N- to C-terminus: PTI1-like tyrosine-protein kinase At3g15890 (361 aa).

Residues 39 to 328 form the Protein kinase domain; that stretch reads FNYDNKLGEG…ISELEANPLF (290 aa). Residues 45–53 and Lys67 contribute to the ATP site; that span reads LGEGRFGSV. Asp165 (proton acceptor) is an active-site residue. Disordered stretches follow at residues 195–219 and 323–361; these read TGDGATKAKSNNGYISPECDASGKE and EANPLFKNPYSSNENNREHVAEESSDVILEDKDHQQQQE. The span at 351 to 361 shows a compositional bias: basic and acidic residues; that stretch reads LEDKDHQQQQE.

The protein belongs to the protein kinase superfamily. Tyr protein kinase family.

The enzyme catalyses L-tyrosyl-[protein] + ATP = O-phospho-L-tyrosyl-[protein] + ADP + H(+). This chain is PTI1-like tyrosine-protein kinase At3g15890, found in Arabidopsis thaliana (Mouse-ear cress).